Reading from the N-terminus, the 244-residue chain is Uridylate kinase (244 aa).

Residue 18–21 (KVSG) participates in ATP binding. UMP is bound at residue glycine 60. 2 residues coordinate ATP: glycine 61 and arginine 65. UMP is bound by residues aspartate 80 and 141–148 (TGNPFCTT). ATP contacts are provided by threonine 168, glutamine 169, tyrosine 174, and aspartate 177.

It belongs to the UMP kinase family. In terms of assembly, homohexamer.

It localises to the cytoplasm. It carries out the reaction UMP + ATP = UDP + ADP. It participates in pyrimidine metabolism; CTP biosynthesis via de novo pathway; UDP from UMP (UMPK route): step 1/1. Its activity is regulated as follows. Inhibited by UTP. Functionally, catalyzes the reversible phosphorylation of UMP to UDP. The sequence is that of Uridylate kinase from Rickettsia typhi (strain ATCC VR-144 / Wilmington).